The chain runs to 305 residues: ATP synthase F(0) complex subunit B2, mitochondrial (305 aa).

The transit peptide at 1–22 (MSLSRCLPLGQNARVIIIPARL) directs the protein to the mitochondrion.

This sequence belongs to the eukaryotic ATPase B chain family. In terms of assembly, subunit of the F-type ATPase which has 2 components, CF(1) - the catalytic core - and CF(0) - the membrane proton channel.

Its subcellular location is the mitochondrion. The protein resides in the mitochondrion inner membrane. In terms of biological role, mitochondrial membrane ATP synthase (F(1)F(0) ATP synthase or Complex V) produces ATP from ADP in the presence of a proton gradient across the membrane which is generated by electron transport complexes of the respiratory chain. F-type ATPases consist of two structural domains, F(1) - containing the extramembraneous catalytic core, and F(0) - containing the membrane proton channel, linked together by a central stalk and a peripheral stalk. During catalysis, ATP synthesis in the catalytic domain of F(1) is coupled via a rotary mechanism of the central stalk subunits to proton translocation. Part of the complex F(0) domain and the peripheric stalk, which acts as a stator to hold the subunits of the catalytic subcomplexes relative to the rotary elements. Plays a role in somatic development. Does not play a role in germline development. The chain is ATP synthase F(0) complex subunit B2, mitochondrial from Caenorhabditis elegans.